A 219-amino-acid chain; its full sequence is uncharacterized protein (219 aa).

Serine 23 carries the post-translational modification Phosphoserine. Lysine 137 participates in a covalent cross-link: Glycyl lysine isopeptide (Lys-Gly) (interchain with G-Cter in SUMO).

The protein localises to the cytoplasm. This is an uncharacterized protein from Saccharomyces cerevisiae (strain ATCC 204508 / S288c) (Baker's yeast).